The following is a 340-amino-acid chain: GTP 3',8-cyclase (340 aa).

Positions 8 to 227 constitute a Radical SAM core domain; sequence KLGRPIRDLR…SMIQEEFDIE (220 aa). Residue Arg17 participates in GTP binding. [4Fe-4S] cluster is bound by residues Cys24 and Cys28. Tyr30 is an S-adenosyl-L-methionine binding site. Position 31 (Cys31) interacts with [4Fe-4S] cluster. GTP is bound at residue Arg71. Gly75 is an S-adenosyl-L-methionine binding site. A GTP-binding site is contributed by Thr102. Residue Ser126 participates in S-adenosyl-L-methionine binding. Residue Lys163 coordinates GTP. Residue Met197 coordinates S-adenosyl-L-methionine. [4Fe-4S] cluster contacts are provided by Cys261 and Cys264. Residue 266 to 268 participates in GTP binding; sequence RAR. [4Fe-4S] cluster is bound at residue Cys278.

The protein belongs to the radical SAM superfamily. MoaA family. In terms of assembly, monomer and homodimer. Requires [4Fe-4S] cluster as cofactor.

The catalysed reaction is GTP + AH2 + S-adenosyl-L-methionine = (8S)-3',8-cyclo-7,8-dihydroguanosine 5'-triphosphate + 5'-deoxyadenosine + L-methionine + A + H(+). The protein operates within cofactor biosynthesis; molybdopterin biosynthesis. Catalyzes the cyclization of GTP to (8S)-3',8-cyclo-7,8-dihydroguanosine 5'-triphosphate. This Staphylococcus carnosus (strain TM300) protein is GTP 3',8-cyclase.